The sequence spans 397 residues: MKEKVVLAYSGGLDTSIIIPWLKENYDLDVIAVCVNVGQGDDMDYVKTKAIKSGASKIYVEDVKEEFVVDYLYKAIKSEALYEQDYMLGTSFARPLMAKKLVEIAHKEQAKYICHGCTGKGNDQVRFEVGVKAQDPTIKIIAPWRIWDIKSREDAIDYAKKVGVEVPVTKKKIYSVDRNLWHVSHEGGDLEDLKNEHKEDMYFMVTPPEKAKDEPTYLEIYFEKGVPVKINGEFLNPVDIIDKLNTIGGENGIGIADIIENRLVGMKSRGIYETPAGTLLYAAHKKLESVTLDKYTYQYKKLVSAQYGELVYNGLWFTALREAIDAFVDKTQENVTGTVKLKLYKGNIKPCSVDTEYALYDEGISSFGESELYSHKDAEGFINLFGLPCKIKALKNF.

Residue Ala-8–Ser-16 participates in ATP binding. Tyr-86 and Ser-91 together coordinate L-citrulline. Residue Gly-116 coordinates ATP. Positions 118, 122, and 123 each coordinate L-aspartate. Residue Asn-122 participates in L-citrulline binding. Residues Arg-126, Ser-175, Ser-184, Glu-260, and Tyr-272 each contribute to the L-citrulline site.

Belongs to the argininosuccinate synthase family. Type 1 subfamily. In terms of assembly, homotetramer.

It is found in the cytoplasm. The enzyme catalyses L-citrulline + L-aspartate + ATP = 2-(N(omega)-L-arginino)succinate + AMP + diphosphate + H(+). The protein operates within amino-acid biosynthesis; L-arginine biosynthesis; L-arginine from L-ornithine and carbamoyl phosphate: step 2/3. In Clostridium botulinum (strain Langeland / NCTC 10281 / Type F), this protein is Argininosuccinate synthase.